A 618-amino-acid polypeptide reads, in one-letter code: Chaperone protein DnaK (618 aa).

The residue at position 175 (Thr-175) is a Phosphothreonine; by autocatalysis. The tract at residues Gly-579–Lys-618 is disordered. The span at Ala-591–Asp-604 shows a compositional bias: low complexity.

The protein belongs to the heat shock protein 70 family.

In terms of biological role, acts as a chaperone. In Clostridium tetani (strain Massachusetts / E88), this protein is Chaperone protein DnaK.